Here is a 210-residue protein sequence, read N- to C-terminus: MNLMNPTTGPVAITSNGLVPMVIEQTARGERSFDIYSRLLKERVIFLVGQVEDHMANLVVAQLLFLESENPDKDIHLYINSPGGSVTAGMSIYDTMQFIKPDVSTMCIGQAASMGALLLTAGAAGKRYCLPNSRVMIHQPLGGYQGQASDIEIHTREILSIKHKLNEIISFHTGKPIEQVALDTDRDNFMNPQTAKDYGLIDEILQKRTV.

The active-site Nucleophile is the serine 113. Histidine 138 is an active-site residue.

Belongs to the peptidase S14 family. As to quaternary structure, fourteen ClpP subunits assemble into 2 heptameric rings which stack back to back to give a disk-like structure with a central cavity, resembling the structure of eukaryotic proteasomes.

The protein localises to the cytoplasm. The enzyme catalyses Hydrolysis of proteins to small peptides in the presence of ATP and magnesium. alpha-casein is the usual test substrate. In the absence of ATP, only oligopeptides shorter than five residues are hydrolyzed (such as succinyl-Leu-Tyr-|-NHMec, and Leu-Tyr-Leu-|-Tyr-Trp, in which cleavage of the -Tyr-|-Leu- and -Tyr-|-Trp bonds also occurs).. Cleaves peptides in various proteins in a process that requires ATP hydrolysis. Has a chymotrypsin-like activity. Plays a major role in the degradation of misfolded proteins. This is ATP-dependent Clp protease proteolytic subunit from Marinomonas sp. (strain MWYL1).